Here is a 583-residue protein sequence, read N- to C-terminus: Laminarase-resistance protein LRE1 (583 aa).

Positions 1 to 24 (MPNTHTQHVQISEPNPVNTLSTPS) are enriched in polar residues. 2 disordered regions span residues 1 to 31 (MPNT…HRHR) and 330 to 380 (LKDN…HMQH). 2 stretches are compositionally biased toward basic and acidic residues: residues 332–342 (DNPRYAKDGYP) and 354–366 (LDSD…SGES). 2 positions are modified to phosphoserine: Ser393 and Ser398. The interval 457-486 (SCTPDGKEEMNRLKSNDSNEYSKSEGQIRT) is disordered. Residues 461 to 479 (DGKEEMNRLKSNDSNEYSK) show a composition bias toward basic and acidic residues. Ser516 and Ser552 each carry phosphoserine.

Post-translationally, phosphorylated by CDC28/CDK1.

Its function is as follows. Overexpression affects chitinase expression, cell separation and budding pattern, and increases trehalose accumulation and heat resistance by inhibiting protein kinase CBK1. Overexpression also suppresses temperature-induced hyperosmosensitivity and sensitivity to cell wall degrading enzymes. Overexpression of both LRE1 and PBN1 confers resistance to laminarinase. The protein is Laminarase-resistance protein LRE1 (LRE1) of Saccharomyces cerevisiae (strain ATCC 204508 / S288c) (Baker's yeast).